Reading from the N-terminus, the 839-residue chain is Probable beta-glucosidase I (839 aa).

The N-linked (GlcNAc...) asparagine glycan is linked to N197. D225 is an active-site residue. The PA14 domain maps to 395 to 555 (DGKTGFSFKV…GQEELISNAV (161 aa)). N620 carries an N-linked (GlcNAc...) asparagine glycan.

This sequence belongs to the glycosyl hydrolase 3 family.

Its subcellular location is the secreted. The enzyme catalyses Hydrolysis of terminal, non-reducing beta-D-glucosyl residues with release of beta-D-glucose.. It participates in glycan metabolism; cellulose degradation. Its function is as follows. Beta-glucosidases are one of a number of cellulolytic enzymes involved in the degradation of cellulosic biomass. Catalyzes the last step releasing glucose from the inhibitory cellobiose. In Aspergillus oryzae (strain ATCC 42149 / RIB 40) (Yellow koji mold), this protein is Probable beta-glucosidase I (bglI).